The following is a 350-amino-acid chain: Nicotinate-nucleotide--dimethylbenzimidazole phosphoribosyltransferase (350 aa).

E317 (proton acceptor) is an active-site residue.

This sequence belongs to the CobT family.

It catalyses the reaction 5,6-dimethylbenzimidazole + nicotinate beta-D-ribonucleotide = alpha-ribazole 5'-phosphate + nicotinate + H(+). It participates in nucleoside biosynthesis; alpha-ribazole biosynthesis; alpha-ribazole from 5,6-dimethylbenzimidazole: step 1/2. In terms of biological role, catalyzes the synthesis of alpha-ribazole-5'-phosphate from nicotinate mononucleotide (NAMN) and 5,6-dimethylbenzimidazole (DMB). This is Nicotinate-nucleotide--dimethylbenzimidazole phosphoribosyltransferase from Shewanella sp. (strain MR-4).